The chain runs to 429 residues: MKKQRNLRSMAAQAVEQVVEQGQSLSNILPPLQQKVSDKDKALLQELCFGVLRTLSQLDWLINKLMARPMTGKQRTVHYLIMVGLYQLLYTRIPPHAALAETVEGAIAIKRPQLKGLINGVLRQFQRRQEELLAEFNTRDARYLHPSWLLKRLQKAYPEQWQSIAEANNQRPPMWLRINRTHHSRDSWLALLDEAGMKGFPHADYPDAVRLETPAPVHALPGFEDGWVTVQDASAQGCMTWLAPQNGEHILDLCAAPGGKTTHILEVAPEAQVVAVDIDEQRLSRIYDNLKRLGMKATVKQGDGRYPSQWCGEQQFDRILLDAPCSATGVIRRHPDIKWLRRDRDIPELAQLQSEILDAIWPHLKSGGTLVYATCSVLPEENSLQIKAFLQRTADAELCETGTPEQPGKQNQPGAEEGDGFFYAKLIKK.

Residues 254–260 (CAAPGGK), aspartate 277, aspartate 303, and aspartate 322 contribute to the S-adenosyl-L-methionine site. Cysteine 375 functions as the Nucleophile in the catalytic mechanism.

The protein belongs to the class I-like SAM-binding methyltransferase superfamily. RsmB/NOP family.

Its subcellular location is the cytoplasm. The enzyme catalyses cytidine(967) in 16S rRNA + S-adenosyl-L-methionine = 5-methylcytidine(967) in 16S rRNA + S-adenosyl-L-homocysteine + H(+). Specifically methylates the cytosine at position 967 (m5C967) of 16S rRNA. This Shigella flexneri protein is Ribosomal RNA small subunit methyltransferase B.